We begin with the raw amino-acid sequence, 154 residues long: Protein-export protein SecB (154 aa).

Belongs to the SecB family. In terms of assembly, homotetramer, a dimer of dimers. One homotetramer interacts with 1 SecA dimer.

It localises to the cytoplasm. Its function is as follows. One of the proteins required for the normal export of preproteins out of the cell cytoplasm. It is a molecular chaperone that binds to a subset of precursor proteins, maintaining them in a translocation-competent state. It also specifically binds to its receptor SecA. The sequence is that of Protein-export protein SecB from Buchnera aphidicola subsp. Schizaphis graminum (strain Sg).